The primary structure comprises 536 residues: Proto-oncogene tyrosine-protein kinase Yrk (536 aa).

A lipid anchor (N-myristoyl glycine) is attached at glycine 2. S-palmitoyl cysteine attachment occurs at residues cysteine 3 and cysteine 6. The segment at 10–36 (ISGKGQGGSGTGTPAHPPSQYDPDPTQ) is disordered. The SH3 domain occupies 81-142 (GGVTLFIALY…PSNYVAPVDS (62 aa)). In terms of domain architecture, SH2 spans 148–245 (WYFGKIGRKD…GLCCRLAVPC (98 aa)). One can recognise a Protein kinase domain in the interval 270 to 523 (LQLLQKLGNG…YLQSFLEDYF (254 aa)). ATP is bound by residues 276–284 (LGNGQFGEV) and lysine 298. The Proton acceptor role is filled by aspartate 389. The residue at position 419 (tyrosine 419) is a Phosphotyrosine; by autocatalysis. Phosphotyrosine is present on tyrosine 530.

The protein belongs to the protein kinase superfamily. Tyr protein kinase family. SRC subfamily. Post-translationally, phosphorylated. In terms of tissue distribution, there are elevated levels of this protein in neural and hematopoietic tissues.

It catalyses the reaction L-tyrosyl-[protein] + ATP = O-phospho-L-tyrosyl-[protein] + ADP + H(+). Functionally, may participate in signaling pathways. This Gallus gallus (Chicken) protein is Proto-oncogene tyrosine-protein kinase Yrk (YRK).